Reading from the N-terminus, the 233-residue chain is Large ribosomal subunit protein uL1 (233 aa).

Belongs to the universal ribosomal protein uL1 family. Part of the 50S ribosomal subunit.

Its function is as follows. Binds directly to 23S rRNA. The L1 stalk is quite mobile in the ribosome, and is involved in E site tRNA release. In terms of biological role, protein L1 is also a translational repressor protein, it controls the translation of the L11 operon by binding to its mRNA. In Geobacillus sp. (strain WCH70), this protein is Large ribosomal subunit protein uL1.